Here is a 612-residue protein sequence, read N- to C-terminus: Cyclin-dependent kinase G1 (612 aa).

A compositionally biased stretch (basic and acidic residues) spans 26–54; it reads SRDVYVRQSGRDDERRQIKRPSDHDLRRN. 2 disordered regions span residues 26–60 and 239–278; these read SRDV…RHRS and CYSS…EDQD. The 297-residue stretch at 297–593 folds into the Protein kinase domain; it reads FQKLNKINEG…VEDALNHGWF (297 aa). ATP is bound by residues 303–311 and Lys326; that span reads INEGTYGIV. Phosphotyrosine is present on Tyr308. The Proton acceptor role is filled by Asp426. Phosphoserine is present on Ser453. Thr459 is subject to Phosphothreonine.

This sequence belongs to the protein kinase superfamily. Ser/Thr protein kinase family. Forms a complex with CYCL1-1. Associated with the spliceosome. Interacts with RS2Z33. In terms of tissue distribution, expressed in leaves and inflorescences. Lower levels of expression in roots and stems.

It is found in the nucleus speckle. The catalysed reaction is L-seryl-[protein] + ATP = O-phospho-L-seryl-[protein] + ADP + H(+). The enzyme catalyses L-threonyl-[protein] + ATP = O-phospho-L-threonyl-[protein] + ADP + H(+). Its function is as follows. Cyclin-dependent kinase involved in pre-mRNA splicing. Required for the correct splicing of the sixth intron of CALS5 pre-mRNA. May stabilize the binding of U1 snRNP to this rare type of intron with a GC 5'SS. Involved in chromosome pairing and is required for the completion of synapsis in male meiocytes at high ambient temperatures. The sequence is that of Cyclin-dependent kinase G1 (CDKG1) from Arabidopsis thaliana (Mouse-ear cress).